The primary structure comprises 911 residues: Probable dipeptidyl-aminopeptidase B (911 aa).

Residues 1-39 (MPRPRAAKEEETELLAQHQESPRPSSDGSEASASSISTT) form a disordered region. Residues 1–97 (MPRPRAAKEE…TPVDKKARRT (97 aa)) lie on the Cytoplasmic side of the membrane. A compositionally biased stretch (low complexity) spans 25–39 (SSDGSEASASSISTT). A helical; Signal-anchor for type II membrane protein membrane pass occupies residues 98–118 (LWIVGTICAVGWALALVSFLM). Topologically, residues 119–911 (NGNYKHSSTR…AQADARSLGR (793 aa)) are vacuolar. 2 N-linked (GlcNAc...) asparagine glycosylation sites follow: Asn-268 and Asn-564. Ser-755 (charge relay system) is an active-site residue. N-linked (GlcNAc...) asparagine glycosylation is present at Asn-809. Active-site charge relay system residues include Asp-832 and His-865.

Belongs to the peptidase S9B family.

The protein resides in the vacuole membrane. It carries out the reaction Release of an N-terminal dipeptide, Xaa-Yaa-|-Zaa-, from a polypeptide, preferentially when Yaa is Pro, provided Zaa is neither Pro nor hydroxyproline.. Type IV dipeptidyl-peptidase which removes N-terminal dipeptides sequentially from polypeptides having unsubstituted N-termini provided that the penultimate residue is proline. This is Probable dipeptidyl-aminopeptidase B (DAPB) from Phaeosphaeria nodorum (strain SN15 / ATCC MYA-4574 / FGSC 10173) (Glume blotch fungus).